The primary structure comprises 130 residues: Small ribosomal subunit protein uS9 (130 aa).

The disordered stretch occupies residues 107-130 (DSREVERKKVGLRKARRRPQFSKR). Residues 116 to 130 (VGLRKARRRPQFSKR) show a composition bias toward basic residues.

It belongs to the universal ribosomal protein uS9 family.

The chain is Small ribosomal subunit protein uS9 from Marinomonas sp. (strain MWYL1).